The chain runs to 229 residues: PKHD-type hydroxylase Rpal_3968 (229 aa).

Residues 78–180 (QIFPPLFNRY…RVASFFWLQS (103 aa)) enclose the Fe2OG dioxygenase domain. 3 residues coordinate Fe cation: His-98, Asp-100, and His-161. Arg-171 contacts 2-oxoglutarate.

The cofactor is Fe(2+). It depends on L-ascorbate as a cofactor.

The sequence is that of PKHD-type hydroxylase Rpal_3968 from Rhodopseudomonas palustris (strain TIE-1).